The following is a 507-amino-acid chain: Fluoroacetaldehyde dehydrogenase (507 aa).

219 to 225 (GFGIEAG) lines the NAD(+) pocket. Active-site residues include Glu-263 and Cys-302.

Belongs to the aldehyde dehydrogenase family. As to quaternary structure, homotetramer.

The catalysed reaction is fluoroacetaldehyde + NAD(+) + H2O = fluoroacetate + NADH + 2 H(+). Catalyzes the oxidation of fluoroacetaldehyde to fluoroacetate. Has high affinity for fluoroacetate and glycolaldehyde but not for acetaldehyde. This chain is Fluoroacetaldehyde dehydrogenase, found in Streptantibioticus cattleyicolor (strain ATCC 35852 / DSM 46488 / JCM 4925 / NBRC 14057 / NRRL 8057) (Streptomyces cattleya).